Here is a 443-residue protein sequence, read N- to C-terminus: UDP-N-acetylmuramate--L-alanine ligase (443 aa).

Residue 111–117 participates in ATP binding; the sequence is GAHGKTS.

It belongs to the MurCDEF family.

The protein localises to the cytoplasm. It carries out the reaction UDP-N-acetyl-alpha-D-muramate + L-alanine + ATP = UDP-N-acetyl-alpha-D-muramoyl-L-alanine + ADP + phosphate + H(+). It functions in the pathway cell wall biogenesis; peptidoglycan biosynthesis. Cell wall formation. The chain is UDP-N-acetylmuramate--L-alanine ligase from Levilactobacillus brevis (strain ATCC 367 / BCRC 12310 / CIP 105137 / JCM 1170 / LMG 11437 / NCIMB 947 / NCTC 947) (Lactobacillus brevis).